Consider the following 550-residue polypeptide: Hydroxylamine reductase (550 aa).

4 residues coordinate [2Fe-2S] cluster: C3, C6, C18, and C25. Residues H249, E273, C317, C405, C433, C458, E492, and K494 each contribute to the hybrid [4Fe-2O-2S] cluster site. Position 405 is a cysteine persulfide (C405).

This sequence belongs to the HCP family. The cofactor is [2Fe-2S] cluster. Hybrid [4Fe-2O-2S] cluster is required as a cofactor.

The protein resides in the cytoplasm. The enzyme catalyses A + NH4(+) + H2O = hydroxylamine + AH2 + H(+). Functionally, catalyzes the reduction of hydroxylamine to form NH(3) and H(2)O. In Escherichia fergusonii (strain ATCC 35469 / DSM 13698 / CCUG 18766 / IAM 14443 / JCM 21226 / LMG 7866 / NBRC 102419 / NCTC 12128 / CDC 0568-73), this protein is Hydroxylamine reductase.